Consider the following 402-residue polypeptide: Rubredoxin-oxygen oxidoreductase (402 aa).

Positions 30–216 are zinc metallo-hydrolase; it reads PMGTTYNAYL…KAIETLVGAG (187 aa). Positions 79, 81, 83, 146, 165, and 226 each coordinate Fe cation. Residues 255–393 form the Flavodoxin-like domain; the sequence is VVIFYDSMWH…QLKTMAQTIA (139 aa).

It in the N-terminal section; belongs to the zinc metallo-hydrolase group 3 family. Homodimer. The cofactor is FMN. Fe cation is required as a cofactor.

It participates in energy metabolism; electron transfer. Catalyzes the four-electron reduction of one oxygen molecule to two water molecules. This is Rubredoxin-oxygen oxidoreductase (roo) from Megalodesulfovibrio gigas (strain ATCC 19364 / DSM 1382 / NCIMB 9332 / VKM B-1759) (Desulfovibrio gigas).